Consider the following 31-residue polypeptide: Cytochrome b6-f complex subunit 6 (31 aa).

Residues 4–26 (LTSYFGFLLAALTITSALFIGLS) form a helical membrane-spanning segment.

The protein belongs to the PetL family. The 4 large subunits of the cytochrome b6-f complex are cytochrome b6, subunit IV (17 kDa polypeptide, PetD), cytochrome f and the Rieske protein, while the 4 small subunits are PetG, PetL, PetM and PetN. The complex functions as a dimer.

The protein localises to the plastid. Its subcellular location is the chloroplast thylakoid membrane. Functionally, component of the cytochrome b6-f complex, which mediates electron transfer between photosystem II (PSII) and photosystem I (PSI), cyclic electron flow around PSI, and state transitions. PetL is important for photoautotrophic growth as well as for electron transfer efficiency and stability of the cytochrome b6-f complex. The polypeptide is Cytochrome b6-f complex subunit 6 (Aethionema grandiflorum (Persian stone-cress)).